A 121-amino-acid polypeptide reads, in one-letter code: Putative membrane protein insertion efficiency factor (121 aa).

This sequence belongs to the UPF0161 family.

It localises to the cell membrane. Functionally, could be involved in insertion of integral membrane proteins into the membrane. This chain is Putative membrane protein insertion efficiency factor, found in Rhodococcus opacus (strain B4).